The sequence spans 160 residues: MD-2-related lipid-recognition protein ROSY1 (160 aa).

The N-terminal stretch at 1 to 23 (MAISHTQLLLLLLVSLFFSPALC) is a signal peptide.

In terms of assembly, interacts with SYT1. Expressed exclusively in roots, in epidermis and cortex cells of the root elongation zone, and lateral root cap cells at the root tip.

The protein localises to the cytoplasm. In terms of biological role, involved in the regulation of gravitropic response and basipetal auxin transport in roots. Involved in salt stress tolerance. May facilitate membrane trafficking and asymmetric cell elongation via SYT1. Binds stigmasterol and dipalmitoyl phosphoethanolamine (DPPE) in vitro. In Arabidopsis thaliana (Mouse-ear cress), this protein is MD-2-related lipid-recognition protein ROSY1.